The following is a 555-amino-acid chain: Glutamine--tRNA ligase (555 aa).

The 'HIGH' region motif lies at 34-44; sequence PEPNGYLHIGH. ATP is bound by residues 35-37 and 41-47; these read EPN and HIGHAKS. L-glutamine is bound by residues aspartate 67 and tyrosine 212. ATP-binding positions include threonine 231, 261–262, and 269–271; these read RL and MSK. A 'KMSKS' region motif is present at residues 268–272; sequence VMSKR. Residues 317–324 are interaction with tRNA; the sequence is TKQDNTIE.

Belongs to the class-I aminoacyl-tRNA synthetase family. Monomer.

The protein resides in the cytoplasm. The catalysed reaction is tRNA(Gln) + L-glutamine + ATP = L-glutaminyl-tRNA(Gln) + AMP + diphosphate. In Salmonella newport (strain SL254), this protein is Glutamine--tRNA ligase.